The primary structure comprises 153 residues: SKP1-like protein 9 (153 aa).

The tract at residues 95-153 is interaction with the F-box domain of F-box proteins; the sequence is IKAANYLNIKSLFDLACQTVAEIIKGNTPEQIREFFNIENDLTPEEEAAIRRENKWAFE.

Belongs to the SKP1 family. Part of a SCF (SKP1-cullin-F-box) protein ligase complex. Interacts with CPR1/CPR30 and At3g61590. In terms of tissue distribution, expressed in leaves, shoot apical meristem (SAM), roots, flowers and pollen.

The protein resides in the nucleus. It participates in protein modification; protein ubiquitination. Its function is as follows. Involved in ubiquitination and subsequent proteasomal degradation of target proteins. Together with CUL1, RBX1 and a F-box protein, it forms a SCF E3 ubiquitin ligase complex. The functional specificity of this complex depends on the type of F-box protein. In the SCF complex, it serves as an adapter that links the F-box protein to CUL1. This is SKP1-like protein 9 (ASK9) from Arabidopsis thaliana (Mouse-ear cress).